We begin with the raw amino-acid sequence, 89 residues long: Nucleoside triphosphatase I (89 aa).

Residues phenylalanine 42–leucine 89 enclose the Helicase ATP-binding domain. An ATP-binding site is contributed by histidine 55–threonine 62.

The protein belongs to the helicase family. NPH I subfamily.

The catalysed reaction is a ribonucleoside 5'-triphosphate + H2O = a ribonucleoside 5'-diphosphate + phosphate + H(+). In terms of biological role, serves two roles in transcription; it acts in concert with viral termination factor/capping enzyme to catalyze release of UUUUUNU-containing nascent RNA from the elongation complex, and it acts by itself as a polymerase elongation factor to facilitate readthrough of intrinsic pause sites. This Swinepox virus (strain Kasza) (SWPV) protein is Nucleoside triphosphatase I (NPH1).